The chain runs to 161 residues: Protein-export protein SecB (161 aa).

This sequence belongs to the SecB family. As to quaternary structure, homotetramer, a dimer of dimers. One homotetramer interacts with 1 SecA dimer.

Its subcellular location is the cytoplasm. One of the proteins required for the normal export of preproteins out of the cell cytoplasm. It is a molecular chaperone that binds to a subset of precursor proteins, maintaining them in a translocation-competent state. It also specifically binds to its receptor SecA. This chain is Protein-export protein SecB, found in Rhodopseudomonas palustris (strain BisA53).